Consider the following 239-residue polypeptide: MGRAYQNRKESMAKTSDAKAKVYSKFSREIYVTAKSGGVEPESNLALQGLIERAKKAQVPAHVIDKALDKAKGGGGEDFAIARYEGYGPGNSMVIIECLTDNPNRTFGDVRSCFTKTKTKIGTQGSVSHMFDHAAILVFAGEDEEAVLEALLMADVDVSDIENEDGKISVFVPHTEYAKAKTALVDAFGAIDFEVDEIQFLPHMTKPIDNEEDRELFEKFLEMLDDLDDVQNVYYDVEL.

This sequence belongs to the TACO1 family.

It is found in the cytoplasm. The sequence is that of Probable transcriptional regulatory protein Tcr_1104 from Hydrogenovibrio crunogenus (strain DSM 25203 / XCL-2) (Thiomicrospira crunogena).